Here is a 341-residue protein sequence, read N- to C-terminus: Spindle assembly checkpoint protein BUB3 (341 aa).

7 WD repeats span residues 9–48 (APKDYISDIKIIPSKSLLLITSWDGSLTVYKFDIQAKNVD), 54–96 (RYKH…QALT), 97–137 (NNEA…DGVI), 144–185 (SNNT…DDNG), 191–233 (GLKY…YNSS), 249–288 (NLAYPVNSIEFSPRHKFLYTAGSDGIISCWNLQTRKKIKN), and 292–329 (FNEDSVVKIACSDNILCLATSDDTFKTNAAIDQTIELN).

Belongs to the WD repeat BUB3 family. As to quaternary structure, component of the mitotic checkpoint complex (MCC) which consists of MAD2, MAD3, BUB3 and CDC20. Part of complex consisting of MAD1, BUB1 and BUB3 after activation of spindle checkpoint. Part of the BUB1-BUB3 complex, composed of BUB1 and BUB3. Interacts with SPC105 (via phosphorylated MELT motifs); the interaction is direct and occurs when part of the BUB1-BUB3 complex. Interacts with MAD3; the interaction is direct. Post-translationally, phosphorylated by BUB1.

The protein resides in the nucleus. The protein localises to the chromosome. It localises to the centromere. Its subcellular location is the kinetochore. Its function is as follows. Involved in mitotic spindle assembly checkpoint signaling, a process that delays anaphase until chromosomes are bioriented on the spindle, and in the repair of incorrect mitotic kinetochore-spindle microtubule attachments. Component of the mitotic checkpoint complex (MCC) which inhibits the ubiquitin ligase activity of the anaphase promoting complex/cyclosome (APC/C) by preventing its activation by CDC20. This chain is Spindle assembly checkpoint protein BUB3 (BUB3), found in Saccharomyces cerevisiae (strain ATCC 204508 / S288c) (Baker's yeast).